The following is a 697-amino-acid chain: Polyribonucleotide nucleotidyltransferase (697 aa).

Residues Asp484 and Asp490 each contribute to the Mg(2+) site. Residues 551-610 enclose the KH domain; the sequence is PRITTIWVKTDKIRDVIGSGGKNIRGITEATGVSIDIEDSGRINIASTSKEACDKAIKMI. Positions 620–688 constitute an S1 motif domain; that stretch reads GKLYMGTVKK…KQGKIKLSRK (69 aa).

It belongs to the polyribonucleotide nucleotidyltransferase family. The cofactor is Mg(2+).

The protein localises to the cytoplasm. The catalysed reaction is RNA(n+1) + phosphate = RNA(n) + a ribonucleoside 5'-diphosphate. In terms of biological role, involved in mRNA degradation. Catalyzes the phosphorolysis of single-stranded polyribonucleotides processively in the 3'- to 5'-direction. This Geobacter sulfurreducens (strain ATCC 51573 / DSM 12127 / PCA) protein is Polyribonucleotide nucleotidyltransferase.